We begin with the raw amino-acid sequence, 91 residues long: Insertion element IS1 2 protein InsA (91 aa).

Belongs to the IS1 elements InsA family.

Absolutely required for transposition of IS1. The chain is Insertion element IS1 2 protein InsA (insA2) from Escherichia coli (strain K12).